The primary structure comprises 264 residues: Small ribosomal subunit protein eS1 (264 aa).

Positions 233–264 (GEGGGAGKPAGDETGAKVERADGYEPPVQESV) are disordered. Residues 242–255 (AGDETGAKVERADG) are compositionally biased toward basic and acidic residues.

Belongs to the eukaryotic ribosomal protein eS1 family. In terms of assembly, component of the small ribosomal subunit. Mature ribosomes consist of a small (40S) and a large (60S) subunit. The 40S subunit contains about 33 different proteins and 1 molecule of RNA (18S). The 60S subunit contains about 49 different proteins and 3 molecules of RNA (28S, 5.8S and 5S). Part of the small subunit (SSU) processome, composed of more than 70 proteins and the RNA chaperone small nucleolar RNA (snoRNA) U3.

It localises to the cytoplasm. It is found in the nucleus. The protein resides in the nucleolus. Its function is as follows. Component of the small ribosomal subunit. The ribosome is a large ribonucleoprotein complex responsible for the synthesis of proteins in the cell. Part of the small subunit (SSU) processome, first precursor of the small eukaryotic ribosomal subunit. During the assembly of the SSU processome in the nucleolus, many ribosome biogenesis factors, an RNA chaperone and ribosomal proteins associate with the nascent pre-rRNA and work in concert to generate RNA folding, modifications, rearrangements and cleavage as well as targeted degradation of pre-ribosomal RNA by the RNA exosome. May play a role during erythropoiesis. The protein is Small ribosomal subunit protein eS1 (rps3a) of Xenopus tropicalis (Western clawed frog).